Consider the following 444-residue polypeptide: ATP-dependent protease ATPase subunit HslU (444 aa).

Residues Ile20 and 62 to 67 (GVGKTE) contribute to the ATP site. The tract at residues 137-162 (LVPPSRGTSGEPERGEDSNARQTFRK) is disordered. ATP is bound by residues Asp257, Glu322, and Arg394.

This sequence belongs to the ClpX chaperone family. HslU subfamily. A double ring-shaped homohexamer of HslV is capped on each side by a ring-shaped HslU homohexamer. The assembly of the HslU/HslV complex is dependent on binding of ATP.

It localises to the cytoplasm. ATPase subunit of a proteasome-like degradation complex; this subunit has chaperone activity. The binding of ATP and its subsequent hydrolysis by HslU are essential for unfolding of protein substrates subsequently hydrolyzed by HslV. HslU recognizes the N-terminal part of its protein substrates and unfolds these before they are guided to HslV for hydrolysis. This chain is ATP-dependent protease ATPase subunit HslU, found in Bordetella petrii (strain ATCC BAA-461 / DSM 12804 / CCUG 43448).